A 340-amino-acid polypeptide reads, in one-letter code: Phosphoribosylformylglycinamidine cyclo-ligase (340 aa).

Belongs to the AIR synthase family.

The protein resides in the cytoplasm. It carries out the reaction 2-formamido-N(1)-(5-O-phospho-beta-D-ribosyl)acetamidine + ATP = 5-amino-1-(5-phospho-beta-D-ribosyl)imidazole + ADP + phosphate + H(+). Its pathway is purine metabolism; IMP biosynthesis via de novo pathway; 5-amino-1-(5-phospho-D-ribosyl)imidazole from N(2)-formyl-N(1)-(5-phospho-D-ribosyl)glycinamide: step 2/2. The chain is Phosphoribosylformylglycinamidine cyclo-ligase from Streptococcus gordonii (strain Challis / ATCC 35105 / BCRC 15272 / CH1 / DL1 / V288).